A 580-amino-acid chain; its full sequence is Ran GTPase-activating protein 1 (580 aa).

LRR repeat units follow at residues 48–71 (YEGL…AIAE), 111–134 (GAQL…GFEA), 141–168 (CFTL…ALTE), 207–230 (IGTL…ALAE), 235–258 (NSLL…AMAE), 292–315 (LHKL…SLAE), and 320–343 (KSDL…QVQE). Residues 356-429 (SLSDDEDEDD…PPKLPVDAST (74 aa)) form a disordered region. Positions 358–399 (SDDEDEDDDDDDEDDDDDEDDENDDEEVEEEEEEVEEEEGGD) are enriched in acidic residues.

Belongs to the RNA1 family. Homodimer. Identified in a complex with RANBP2 and the ubiquitin-conjugating enzyme E2 (UBE2I). In terms of processing, may be sumoylated.

The protein localises to the cytoplasm. It is found in the nucleus. It localises to the nucleoplasm. Its subcellular location is the nucleus envelope. The protein resides in the chromosome. The protein localises to the centromere. It is found in the kinetochore. It localises to the cytoskeleton. Its subcellular location is the spindle. GTPase activator for RAN, converting it to the GDP-bound state. Converts cytoplasmic GTP-bound RAN to GDP-bound RAN, which is required for RAN-mediated nuclear import and export. This Xenopus laevis (African clawed frog) protein is Ran GTPase-activating protein 1 (rangap1).